The chain runs to 152 residues: Arginine repressor (152 aa).

The protein belongs to the ArgR family.

The protein localises to the cytoplasm. It participates in amino-acid biosynthesis; L-arginine biosynthesis [regulation]. Functionally, regulates arginine biosynthesis genes. The polypeptide is Arginine repressor (Lactococcus lactis subsp. lactis (strain IL1403) (Streptococcus lactis)).